Reading from the N-terminus, the 152-residue chain is Protein SprT-like (152 aa).

In terms of domain architecture, SprT-like spans 7–147 (QRLVEEVSLQ…CGKCKGKLKP (141 aa)). H67 contacts Zn(2+). E68 is a catalytic residue. Residue H71 coordinates Zn(2+).

This sequence belongs to the SprT family. Zn(2+) serves as cofactor.

It localises to the cytoplasm. The sequence is that of Protein SprT-like from Bacillus cereus (strain B4264).